A 172-amino-acid polypeptide reads, in one-letter code: 6,7-dimethyl-8-ribityllumazine synthase (172 aa).

5-amino-6-(D-ribitylamino)uracil-binding positions include phenylalanine 22 and 56-58; that span reads AFE. Position 78–79 (78–79) interacts with (2S)-2-hydroxy-3-oxobutyl phosphate; that stretch reads LG. 80–82 provides a ligand contact to 5-amino-6-(D-ribitylamino)uracil; sequence AII. Residue histidine 88 is the Proton donor of the active site. Phenylalanine 113 provides a ligand contact to 5-amino-6-(D-ribitylamino)uracil. Residue arginine 127 participates in (2S)-2-hydroxy-3-oxobutyl phosphate binding.

The protein belongs to the DMRL synthase family.

The catalysed reaction is (2S)-2-hydroxy-3-oxobutyl phosphate + 5-amino-6-(D-ribitylamino)uracil = 6,7-dimethyl-8-(1-D-ribityl)lumazine + phosphate + 2 H2O + H(+). It functions in the pathway cofactor biosynthesis; riboflavin biosynthesis; riboflavin from 2-hydroxy-3-oxobutyl phosphate and 5-amino-6-(D-ribitylamino)uracil: step 1/2. Functionally, catalyzes the formation of 6,7-dimethyl-8-ribityllumazine by condensation of 5-amino-6-(D-ribitylamino)uracil with 3,4-dihydroxy-2-butanone 4-phosphate. This is the penultimate step in the biosynthesis of riboflavin. This Protochlamydia amoebophila (strain UWE25) protein is 6,7-dimethyl-8-ribityllumazine synthase.